The sequence spans 111 residues: X antigen family member 2 (111 aa).

2 disordered regions span residues 1–61 (MSWR…AAEI) and 77–111 (KTGDGCEGGTDVKGKILPKAEHFKMPEAGEGKSQV). Over residues 86-111 (TDVKGKILPKAEHFKMPEAGEGKSQV) the composition is skewed to basic and acidic residues.

It belongs to the GAGE family.

The polypeptide is X antigen family member 2 (XAGE2) (Homo sapiens (Human)).